Here is an 83-residue protein sequence, read N- to C-terminus: Exodeoxyribonuclease 7 small subunit (83 aa).

This sequence belongs to the XseB family. Heterooligomer composed of large and small subunits.

It localises to the cytoplasm. It carries out the reaction Exonucleolytic cleavage in either 5'- to 3'- or 3'- to 5'-direction to yield nucleoside 5'-phosphates.. Its function is as follows. Bidirectionally degrades single-stranded DNA into large acid-insoluble oligonucleotides, which are then degraded further into small acid-soluble oligonucleotides. This Novosphingobium aromaticivorans (strain ATCC 700278 / DSM 12444 / CCUG 56034 / CIP 105152 / NBRC 16084 / F199) protein is Exodeoxyribonuclease 7 small subunit.